The primary structure comprises 97 residues: Large ribosomal subunit protein bL28 (97 aa).

This sequence belongs to the bacterial ribosomal protein bL28 family.

The polypeptide is Large ribosomal subunit protein bL28 (Brucella ovis (strain ATCC 25840 / 63/290 / NCTC 10512)).